The primary structure comprises 553 residues: Dihydroxy-acid dehydratase (553 aa).

Residue Cys-49 participates in [2Fe-2S] cluster binding. Asp-81 lines the Mg(2+) pocket. Cys-122 provides a ligand contact to [2Fe-2S] cluster. 2 residues coordinate Mg(2+): Asp-123 and Lys-124. Lys-124 carries the N6-carboxylysine modification. A [2Fe-2S] cluster-binding site is contributed by Cys-194. Glu-444 serves as a coordination point for Mg(2+). The active-site Proton acceptor is the Ser-470.

This sequence belongs to the IlvD/Edd family. In terms of assembly, homodimer. The cofactor is [2Fe-2S] cluster. Requires Mg(2+) as cofactor.

It catalyses the reaction (2R)-2,3-dihydroxy-3-methylbutanoate = 3-methyl-2-oxobutanoate + H2O. The enzyme catalyses (2R,3R)-2,3-dihydroxy-3-methylpentanoate = (S)-3-methyl-2-oxopentanoate + H2O. It participates in amino-acid biosynthesis; L-isoleucine biosynthesis; L-isoleucine from 2-oxobutanoate: step 3/4. The protein operates within amino-acid biosynthesis; L-valine biosynthesis; L-valine from pyruvate: step 3/4. In terms of biological role, functions in the biosynthesis of branched-chain amino acids. Catalyzes the dehydration of (2R,3R)-2,3-dihydroxy-3-methylpentanoate (2,3-dihydroxy-3-methylvalerate) into 2-oxo-3-methylpentanoate (2-oxo-3-methylvalerate) and of (2R)-2,3-dihydroxy-3-methylbutanoate (2,3-dihydroxyisovalerate) into 2-oxo-3-methylbutanoate (2-oxoisovalerate), the penultimate precursor to L-isoleucine and L-valine, respectively. The sequence is that of Dihydroxy-acid dehydratase from Aeropyrum pernix (strain ATCC 700893 / DSM 11879 / JCM 9820 / NBRC 100138 / K1).